The primary structure comprises 347 residues: Hyaluronidase conohyal-ad1 (347 aa).

The first 18 residues, 1-18 (MRAVVVVTGLVVVVVTTT), serve as a signal peptide directing secretion. The propeptide occupies 19-33 (LSLQDHDVKSASSPL). Residues 27 to 49 (KSASSPLSSSVDQGSSGDDCDEG) are disordered. The span at 28–43 (SASSPLSSSVDQGSSG) shows a compositional bias: low complexity. Residues Cys67 and Cys343 are joined by a disulfide bond. Glu150 serves as the catalytic Proton donor.

The protein belongs to the glycosyl hydrolase 56 family. In terms of processing, contains 4 disulfide bonds. Is N-linked glycosylated at three positions. As to expression, expressed by the venom duct.

The protein resides in the secreted. It carries out the reaction Random hydrolysis of (1-&gt;4)-linkages between N-acetyl-beta-D-glucosamine and D-glucuronate residues in hyaluronate.. Its function is as follows. Hyaluronidase catalyzes the hydrolysis of hyaluronic acid (HA), an anionic, nonsulfated glycosaminoglycan distributed widely throughout connective, epithelial, and neural tissues. In venom, they are known to enhance diffusion of the venom by degrading the extracellular matrix. This is Hyaluronidase conohyal-ad1 from Conus adamsonii (Rhododendron cone).